The chain runs to 360 residues: Membrane-bound lytic murein transglycosylase C (360 aa).

A signal peptide spans 1-16; sequence MKKFFALALVAPLLIS. Residue Cys17 is the site of N-palmitoyl cysteine attachment. A lipid anchor (S-diacylglycerol cysteine) is attached at Cys17.

It belongs to the transglycosylase Slt family.

Its subcellular location is the cell outer membrane. The enzyme catalyses Exolytic cleavage of the (1-&gt;4)-beta-glycosidic linkage between N-acetylmuramic acid (MurNAc) and N-acetylglucosamine (GlcNAc) residues in peptidoglycan, from either the reducing or the non-reducing ends of the peptidoglycan chains, with concomitant formation of a 1,6-anhydrobond in the MurNAc residue.. Murein-degrading enzyme. May play a role in recycling of muropeptides during cell elongation and/or cell division. The protein is Membrane-bound lytic murein transglycosylase C of Citrobacter koseri (strain ATCC BAA-895 / CDC 4225-83 / SGSC4696).